Reading from the N-terminus, the 101-residue chain is Integration host factor subunit beta (101 aa).

Positions 58–101 (ARAGRNPRTGAHVPVDQKSVPFFKTGKEMRERLNRDTGAPDSGA) are disordered. The span at 82–92 (TGKEMRERLNR) shows a compositional bias: basic and acidic residues.

The protein belongs to the bacterial histone-like protein family. In terms of assembly, heterodimer of an alpha and a beta chain.

In terms of biological role, this protein is one of the two subunits of integration host factor, a specific DNA-binding protein that functions in genetic recombination as well as in transcriptional and translational control. The polypeptide is Integration host factor subunit beta (Rhodopseudomonas palustris (strain BisB18)).